The chain runs to 822 residues: Aminopeptidase O (822 aa).

Histidine 480 provides a ligand contact to Zn(2+). Glutamate 481 serves as the catalytic Proton acceptor. Residues histidine 484 and glutamate 503 each coordinate Zn(2+). The short motif at 692–702 (RRPGKRQRRKR) is the Nucleolar localization signal element.

The protein belongs to the peptidase M1 family. Zn(2+) serves as cofactor.

The protein localises to the nucleus. It localises to the nucleolus. Its function is as follows. Aminopeptidase which catalyzes the hydrolysis of amino acid residues from the N-terminus of peptide or protein substrates. The polypeptide is Aminopeptidase O (Aopep) (Rattus norvegicus (Rat)).